A 374-amino-acid chain; its full sequence is Trichodiene synthase (374 aa).

Positions 100, 164, 225, 229, 233, 239, and 241 each coordinate Mg(2+). The interval 100–104 (DDSKD) is aspartate-rich domain.

This sequence belongs to the trichodiene synthase family. Mg(2+) serves as cofactor. Requires Mn(2+) as cofactor.

It catalyses the reaction (2E,6E)-farnesyl diphosphate = trichodiene + diphosphate. It participates in sesquiterpene biosynthesis; trichothecene biosynthesis. Its activity is regulated as follows. Benzyl triethylammonium cation (BTAC) acts as a competitive inhibitor of trichodiene synthase reaction in the presence of pyrophosphate (PPi). Functionally, trichodiene synthase; part of the core gene cluster that mediates the biosynthesis of trichothecenes, a very large family of chemically related bicyclic sesquiterpene compounds acting as mycotoxins, including T2-toxin. The biosynthesis of trichothecenes begins with the cyclization of farnesyl diphosphate to trichodiene and is catalyzed by the trichodiene synthase TRI5. Trichodiene undergoes a series of oxygenations catalyzed by the cytochrome P450 monooxygenase TRI4. TRI4 controls the addition of four oxygens at C-2, C-3, C-11, and the C-12, C-13-epoxide to form the intermediate isotrichotriol. Isotrichotriol then undergoes a non-enzymatic isomerization and cyclization to form isotrichodermol. During this process, the oxygen at the C-2 position becomes the pyran ring oxygen and the hydroxyl group at C-11 is lost. More complex type A trichothecenes are built by modifying isotrichodermol through a series of paired hydroxylation and acetylation or acylation steps. Isotrichodermol is converted to isotrichodermin by the acetyltransferase TRI101. TRI101 encodes a C-3 transacetylase that acts as a self-protection or resistance factor during biosynthesis and that the presence of a free C-3 hydroxyl group is a key component of Fusarium trichothecene phytotoxicity. A second hydroxyl group is added to C-15 by the trichothecene C-15 hydroxylase TRI11, producing 15-decalonectrin, which is then acetylated by TRI3, producing calonectrin. A third hydroxyl group is added at C-4 by the cytochrome P450 monooxygenase TRI13, converting calonectrin to 3,15-diacetoxyspirpenol, which is subsequently acetylated by the acetyltransferase TRI7. A fourth hydroxyl group is added to C-8 by the cytochrome P450 monooxygenase TRI1, followed by the addition of an isovaleryl moiety by TRI16. Finally, the acetyl group is removed from the C-3 position by the trichothecene C-3 esterase TRI8 to produce T-2 toxin. The chain is Trichodiene synthase from Fusarium sporotrichioides.